The sequence spans 343 residues: uncharacterized protein (343 aa).

The tract at residues 66–89 is disordered; it reads TQNPEPTSASTPPSASASSLPNGA. Residues 71–84 are compositionally biased toward low complexity; it reads PTSASTPPSASASS. Residues 96–116 form a helical membrane-spanning segment; sequence GVIAGPIVGVLGGLIVLVIIF. Disordered regions lie at residues 161–191 and 252–343; these read GGYQ…NDTR and GRPL…SEHF. A compositionally biased stretch (polar residues) spans 165-188; that stretch reads MHSTPWASSPRNSTIPQRSQSFYN. Over residues 280–289 the composition is skewed to basic and acidic residues; it reads SNDDSDETKL. A compositionally biased stretch (low complexity) spans 290–299; it reads KQSSTESSSE. Basic and acidic residues-rich tracts occupy residues 301 to 311 and 322 to 333; these read LDEKDKFDKNS and SSYEHEISEEHK. Residues 334–343 are compositionally biased toward basic residues; it reads KHSKKRSEHF.

It localises to the golgi apparatus membrane. This is an uncharacterized protein from Schizosaccharomyces pombe (strain 972 / ATCC 24843) (Fission yeast).